The following is a 70-amino-acid chain: Small ribosomal subunit protein eS17 (70 aa).

Belongs to the eukaryotic ribosomal protein eS17 family.

The chain is Small ribosomal subunit protein eS17 from Methanopyrus kandleri (strain AV19 / DSM 6324 / JCM 9639 / NBRC 100938).